The primary structure comprises 289 residues: Protoheme IX farnesyltransferase (289 aa).

9 helical membrane passes run 18–38 (VTSL…EQSP), 40–60 (GFLI…SFIF), 87–107 (VVQA…VLAV), 111–131 (LLTA…YTIF), 139–159 (NIVI…AAIG), 168–188 (SLFM…AIFL), 212–232 (SIFF…FLES), 234–254 (MGFL…ILSY), and 269–289 (FFFS…DHLI).

This sequence belongs to the UbiA prenyltransferase family. Protoheme IX farnesyltransferase subfamily.

The protein resides in the cell inner membrane. The catalysed reaction is heme b + (2E,6E)-farnesyl diphosphate + H2O = Fe(II)-heme o + diphosphate. Its pathway is porphyrin-containing compound metabolism; heme O biosynthesis; heme O from protoheme: step 1/1. Converts heme B (protoheme IX) to heme O by substitution of the vinyl group on carbon 2 of heme B porphyrin ring with a hydroxyethyl farnesyl side group. In Leptospira interrogans serogroup Icterohaemorrhagiae serovar copenhageni (strain Fiocruz L1-130), this protein is Protoheme IX farnesyltransferase.